The following is a 185-amino-acid chain: Folate transporter FolT (185 aa).

A run of 4 helical transmembrane segments spans residues 34–54, 64–84, 114–134, and 157–177; these read LTVG…SLIA, LIAA…AFFV, VAVG…WLVM, and LIMF…QVIS.

In terms of assembly, in E.coli forms a stable energy-coupling factor (ECF) transporter complex probably composed of a membrane-embedded substrate-binding protein (S component), two ATP-binding proteins (A components) and a transmembrane protein (T component).

It localises to the cell membrane. Its function is as follows. Folate-binding protein that interacts with the energy-coupling factor (ECF) ABC-transporter complex. Unlike classic ABC transporters this ECF transporter provides the energy necessary to transport a number of different substrates. The substrates themselves are bound by transmembrane, not extracytoplasmic soluble proteins. Upon coexpression with EcfA1A2T in E.coli allows 5-formyltetrahydrofolate uptake; uptake requires both FolT and EcfA1A2T. The chain is Folate transporter FolT (folT) from Leuconostoc mesenteroides subsp. mesenteroides (strain ATCC 8293 / DSM 20343 / BCRC 11652 / CCM 1803 / JCM 6124 / NCDO 523 / NBRC 100496 / NCIMB 8023 / NCTC 12954 / NRRL B-1118 / 37Y).